Consider the following 677-residue polypeptide: Methionine--tRNA ligase (677 aa).

The short motif at 15-25 (PYANGPIHIGH) is the 'HIGH' region element. Zn(2+) contacts are provided by cysteine 146, cysteine 149, cysteine 159, and cysteine 162. The 'KMSKS' region signature appears at 332–336 (KMSKS). ATP is bound at residue lysine 335. Positions 576–677 (DFAKVDLRVA…DGAKPGMRIM (102 aa)) constitute a tRNA-binding domain.

It belongs to the class-I aminoacyl-tRNA synthetase family. MetG type 1 subfamily. Homodimer. It depends on Zn(2+) as a cofactor.

The protein localises to the cytoplasm. The catalysed reaction is tRNA(Met) + L-methionine + ATP = L-methionyl-tRNA(Met) + AMP + diphosphate. In terms of biological role, is required not only for elongation of protein synthesis but also for the initiation of all mRNA translation through initiator tRNA(fMet) aminoacylation. The chain is Methionine--tRNA ligase from Idiomarina loihiensis (strain ATCC BAA-735 / DSM 15497 / L2-TR).